Here is a 462-residue protein sequence, read N- to C-terminus: Cysteine--tRNA ligase (462 aa).

C24 contacts Zn(2+). The 'HIGH' region motif lies at 26–36 (PTVYDDAHLGH). Positions 199, 224, and 228 each coordinate Zn(2+). A 'KMSKS' region motif is present at residues 256 to 260 (KMSKS). K259 is a binding site for ATP.

This sequence belongs to the class-I aminoacyl-tRNA synthetase family. As to quaternary structure, monomer. Zn(2+) serves as cofactor.

It is found in the cytoplasm. The enzyme catalyses tRNA(Cys) + L-cysteine + ATP = L-cysteinyl-tRNA(Cys) + AMP + diphosphate. The chain is Cysteine--tRNA ligase from Campylobacter jejuni subsp. jejuni serotype O:23/36 (strain 81-176).